A 918-amino-acid chain; its full sequence is Importin subunit beta-2 (918 aa).

HEAT repeat units follow at residues tyrosine 11–glutamate 38, glutamine 43–asparagine 92, tyrosine 103–arginine 137, glycine 145–glutamate 181, glutamate 190–proline 222, phenylalanine 235–leucine 263, aspartate 275–alanine 303, lysine 320–isoleucine 413, isoleucine 421–alanine 449, proline 461–arginine 488, leucine 501–alanine 534, leucine 542–cysteine 577, alanine 583–glycine 620, proline 628–alanine 678, isoleucine 694–asparagine 725, isoleucine 777–proline 814, aspartate 825–threonine 858, and aspartate 867–isoleucine 900. The disordered stretch occupies residues alanine 361–threonine 395. Positions asparagine 372–valine 393 are enriched in acidic residues.

Belongs to the importin beta family. Importin beta-2 subfamily. In terms of assembly, interacts with Ran (GSP1); interacts specifically with the GTP-bound form of Ran (GTP-Ran), protecting it from GTP hydrolysis and nucleotide exchange. Interacts with nucleoporins NUP1, NUP100 and NUP116. Interacts with NAB2 and HRP1/NAB4; via their rg-NLS. Interacts with TFG2; via its PY-NLS.

The protein localises to the cytoplasm. Its subcellular location is the nucleus. It is found in the nuclear pore complex. In terms of biological role, functions in nuclear protein import as nuclear transport receptor. Serves as receptor for arginine/glycine-rich nuclear localization signals (rg-NLS) and PY-NLS in cargo substrates. Its predominant cargo substrate seems to be mRNA-binding proteins. Required for nuclear transport of NAB2, HRP1/NAB4 and TFG2. Mediates docking of the importin/substrate complex to the nuclear pore complex (NPC) through binding to repeat-containing nucleoporins. The complex is subsequently translocated through the pore by an energy requiring, Ran-dependent mechanism. At the nucleoplasmic side of the NPC, GTP-Ran binding leads to release of the cargo. Efficient GTP-Ran-mediated substrate release requires RNA. The importin is re-exported from the nucleus to the cytoplasm where GTP hydrolysis releases Ran from importin. The directionality of nuclear import is thought to be conferred by an asymmetric distribution of the GTP- and GDP-bound forms of Ran between the cytoplasm and nucleus. The protein is Importin subunit beta-2 of Saccharomyces cerevisiae (strain ATCC 204508 / S288c) (Baker's yeast).